Here is a 426-residue protein sequence, read N- to C-terminus: Glutamate-1-semialdehyde 2,1-aminomutase (426 aa).

Lys-265 carries the post-translational modification N6-(pyridoxal phosphate)lysine.

This sequence belongs to the class-III pyridoxal-phosphate-dependent aminotransferase family. HemL subfamily. As to quaternary structure, homodimer. Pyridoxal 5'-phosphate serves as cofactor.

The protein localises to the cytoplasm. It catalyses the reaction (S)-4-amino-5-oxopentanoate = 5-aminolevulinate. The protein operates within porphyrin-containing compound metabolism; protoporphyrin-IX biosynthesis; 5-aminolevulinate from L-glutamyl-tRNA(Glu): step 2/2. In Actinobacillus pleuropneumoniae serotype 5b (strain L20), this protein is Glutamate-1-semialdehyde 2,1-aminomutase.